A 683-amino-acid chain; its full sequence is DNA ligase 2 (683 aa).

NAD(+) is bound by residues Asp-27–Asp-31, Ser-76–Leu-77, and Glu-106. Lys-108 (N6-AMP-lysine intermediate) is an active-site residue. NAD(+) is bound by residues Arg-129, Glu-169, Lys-285, and Lys-309. Zn(2+) contacts are provided by Cys-403, Cys-406, Cys-422, and Cys-428. Positions Ser-592–Glu-681 constitute a BRCT domain.

This sequence belongs to the NAD-dependent DNA ligase family. LigA subfamily. Mg(2+) serves as cofactor. The cofactor is Mn(2+).

It catalyses the reaction NAD(+) + (deoxyribonucleotide)n-3'-hydroxyl + 5'-phospho-(deoxyribonucleotide)m = (deoxyribonucleotide)n+m + AMP + beta-nicotinamide D-nucleotide.. In terms of biological role, DNA ligase that catalyzes the formation of phosphodiester linkages between 5'-phosphoryl and 3'-hydroxyl groups in double-stranded DNA using NAD as a coenzyme and as the energy source for the reaction. It is essential for DNA replication and repair of damaged DNA. The polypeptide is DNA ligase 2 (Nocardia farcinica (strain IFM 10152)).